We begin with the raw amino-acid sequence, 442 residues long: Probable D-serine dehydratase (442 aa).

An N6-(pyridoxal phosphate)lysine modification is found at K111.

Belongs to the serine/threonine dehydratase family. DsdA subfamily. Requires pyridoxal 5'-phosphate as cofactor.

The enzyme catalyses D-serine = pyruvate + NH4(+). The sequence is that of Probable D-serine dehydratase from Sinorhizobium medicae (strain WSM419) (Ensifer medicae).